A 63-amino-acid chain; its full sequence is Large ribosomal subunit protein bL28 (63 aa).

It belongs to the bacterial ribosomal protein bL28 family.

The polypeptide is Large ribosomal subunit protein bL28 (Clostridium acetobutylicum (strain ATCC 824 / DSM 792 / JCM 1419 / IAM 19013 / LMG 5710 / NBRC 13948 / NRRL B-527 / VKM B-1787 / 2291 / W)).